Consider the following 512-residue polypeptide: MQFPPASGSTQMQVQKLPTGIEGFDDVCQGGLPIGRSTLISGTSGTGKTVFSLHFLHNGIKHFDEPGIFVTFEESPLDILRNAASFGWNLQEMVEQDKLFILDASPDPDGQDVAGSFDLSGLIERINYAIRKYKAKRVAIDSITAVFQQYDAVFVVRREIFRLIARLKEIGVTTVMTTERIDEYGPIARYGVEEFVSDNVVILRNVLEGERRRRTVEILKLRGTTHMKGEFPFTMGTHGISIFPLGAMRLTQRSSNVRVSSGVPRLDEMCGGGFFKDSIILATGATGTGKTLLVSKFIEDACRNKERAILFAYEESRAQLLRNGTSWGIDFEQMEQDGLLKIICAYPESTGLEDHLQIIKTDIGQFKPSRMAIDSLSALARGVSHNAFRQFVIGVTGYAKQEEIAGFFTNTSEEFMGSHSITDSHISTITDTILMLQYVEIRGEMARALNVFKMRGSWHDKGIREFVITGNGPQIKDSFSNFERIISGVPHRVTTDERSELSRIARGVSSED.

KaiC domains are found at residues 1-243 and 257-512; these read MQFP…ISIF and VRVS…SSED. Positions 45, 46, 47, 48, 49, 85, 220, 221, 222, 224, 226, 286, 287, 288, 289, 290, 291, and 292 each coordinate ATP. Threonine 49 is a binding site for Mg(2+). Threonine 291 contributes to the Mg(2+) binding site. Glutamate 314 serves as a coordination point for Mg(2+). Residue tryptophan 327 coordinates ATP. Serine 427 carries the post-translational modification Phosphoserine; by autocatalysis. At threonine 428 the chain carries Phosphothreonine; by autocatalysis. ATP is bound by residues arginine 447, lysine 453, methionine 454, arginine 455, serine 457, histidine 459, and lysine 461.

The protein belongs to the KaiC family. As to quaternary structure, homohexamer; hexamerization is dependent on ATP-binding. The KaiABC complex composition changes during the circadian cycle to control KaiC phosphorylation. Complexes KaiC(6), KaiA(2-4):KaiC(6), KaiB(6):KaiC(6) and KaiC(6):KaiB(6):KaiA(12) are among the most important forms, many form cooperatively. KaiC interacts with SasA, activating its autokinase function and leading to RpaA activation. The cofactor is Mg(2+). In terms of processing, phosphorylated on serine and threonine residues by autocatalysis. Has a 4 step phosphorylation cycle; the autokinase acts first on Thr-428, then Ser-427. When Ser-427 is modified KaiC switches to an autophosphatase mode, acting first on phospho-Thr-428 then phospho-Ser-427.

The enzyme catalyses L-seryl-[protein] + ATP = O-phospho-L-seryl-[protein] + ADP + H(+). The catalysed reaction is L-threonyl-[protein] + ATP = O-phospho-L-threonyl-[protein] + ADP + H(+). It carries out the reaction ATP + H2O = ADP + phosphate + H(+). With respect to regulation, the interaction with KaiA enhances its phosphorylation status, while the interaction with KaiB decreases it. Its function is as follows. Central component of the KaiABC oscillator complex, which constitutes the main circadian regulator in cyanobacteria. Complex composition changes during the circadian cycle to control KaiC phosphorylation. KaiA stimulates KaiC autophosphorylation, while KaiB sequesters KaiA, leading to KaiC autodephosphorylation. Clock output pathways impact the RpaA transcriptional regulator. KaiC enhances the autophosphorylation activity of SasA, which then transfers its phosphate group to RpaA to activate it. KaiB and KaiC together enhance the phospho-RpaA dephosphatase activity of CikA. Has a weak, temperature-independent ATPase activity; ATPase activity defines the circadian period. The phosphorylation state of KaiC modulates its ATPase activity and effects KaiB binding. This Parasynechococcus marenigrum (strain WH8102) protein is Circadian clock oscillator protein KaiC.